Reading from the N-terminus, the 239-residue chain is Putative glutamine amidotransferase-like protein YfeJ (239 aa).

The Glutamine amidotransferase type-1 domain maps to 1-200; the sequence is MRVHFVVHES…IQHSQQELAD (200 aa).

The sequence is that of Putative glutamine amidotransferase-like protein YfeJ (yfeJ) from Salmonella typhimurium (strain LT2 / SGSC1412 / ATCC 700720).